The primary structure comprises 137 residues: ATP synthase epsilon chain (137 aa).

Belongs to the ATPase epsilon chain family. In terms of assembly, F-type ATPases have 2 components, CF(1) - the catalytic core - and CF(0) - the membrane proton channel. CF(1) has five subunits: alpha(3), beta(3), gamma(1), delta(1), epsilon(1). CF(0) has three main subunits: a, b and c.

It localises to the cell membrane. Produces ATP from ADP in the presence of a proton gradient across the membrane. The protein is ATP synthase epsilon chain of Desulforudis audaxviator (strain MP104C).